Consider the following 142-residue polypeptide: Large ribosomal subunit protein uL11 (142 aa).

Belongs to the universal ribosomal protein uL11 family. As to quaternary structure, part of the ribosomal stalk of the 50S ribosomal subunit. Interacts with L10 and the large rRNA to form the base of the stalk. L10 forms an elongated spine to which L12 dimers bind in a sequential fashion forming a multimeric L10(L12)X complex. In terms of processing, one or more lysine residues are methylated.

In terms of biological role, forms part of the ribosomal stalk which helps the ribosome interact with GTP-bound translation factors. The polypeptide is Large ribosomal subunit protein uL11 (Histophilus somni (strain 129Pt) (Haemophilus somnus)).